Here is a 412-residue protein sequence, read N- to C-terminus: Divalent metal cation transporter MntH (412 aa).

Over 1-19 the chain is Cytoplasmic; sequence MTNYRVESSSGRAARKMRL. A helical transmembrane segment spans residues 20-39; sequence ALMGPAFIAAIGYIDPGNFA. Residues 40–51 lie on the Periplasmic side of the membrane; sequence TNIQAGASFGYQ. Residues 52-71 traverse the membrane as a helical segment; sequence LLWVVVWANLMAMLIQILSA. The Cytoplasmic segment spans residues 72-95; it reads KLGIATGKNLAEQIRDHYPRPVVW. Residues 96–118 form a helical membrane-spanning segment; sequence FYWVQAEIIAMATDLAEFIGAAI. Residues 119 to 125 lie on the Periplasmic side of the membrane; the sequence is GFKLILG. The helical transmembrane segment at 126–145 threads the bilayer; sequence VSLLQGAVLTGIATFLILML. Residues 146-155 are Cytoplasmic-facing; sequence QRRGQKPLEK. Residues 156–175 form a helical membrane-spanning segment; it reads VIGGLLLFVAAAYIVELIFS. The Periplasmic segment spans residues 176–196; it reads QPNLAQLGKGMVIPSLPTSEA. Residues 197–220 form a helical membrane-spanning segment; it reads VFLAAGVLGATIMPHVIYLHSSLT. The Cytoplasmic segment spans residues 221-238; the sequence is QHLHGGSRQQRYSATKWD. The chain crosses the membrane as a helical span at residues 239 to 258; the sequence is VAIAMTIAGFVNLAMMATAA. Over 259–276 the chain is Periplasmic; the sequence is AAFHFSGHTGVADLDEAY. The helical transmembrane segment at 277-297 threads the bilayer; that stretch reads LTLQPLLSHAAATVFGLSLVA. The Cytoplasmic segment spans residues 298-327; that stretch reads AGLSSTVVGTLAGQVVMQGFIRFHIPLWVR. Residues 328–344 form a helical membrane-spanning segment; it reads RTVTMLPSFIVILMGLD. Residues 345–350 lie on the Periplasmic side of the membrane; that stretch reads PTRILV. The helical transmembrane segment at 351 to 370 threads the bilayer; that stretch reads MSQVLLSFGIALALVPLLIF. The Cytoplasmic segment spans residues 371-387; sequence TSDSKLMGDLVNSKRVK. The helical transmembrane segment at 388–406 threads the bilayer; it reads QTGWVIVVLVVALNIWLLV. Over 407-412 the chain is Periplasmic; that stretch reads GTALGL.

It belongs to the NRAMP family.

The protein resides in the cell inner membrane. Its function is as follows. H(+)-stimulated, divalent metal cation uptake system. The protein is Divalent metal cation transporter MntH of Escherichia fergusonii (strain ATCC 35469 / DSM 13698 / CCUG 18766 / IAM 14443 / JCM 21226 / LMG 7866 / NBRC 102419 / NCTC 12128 / CDC 0568-73).